The following is a 39-amino-acid chain: Photosystem II reaction center protein J (39 aa).

Residues 7 to 27 (IPLWLIGTIVGILVIGLIGIY) form a helical membrane-spanning segment.

This sequence belongs to the PsbJ family. In terms of assembly, PSII is composed of 1 copy each of membrane proteins PsbA, PsbB, PsbC, PsbD, PsbE, PsbF, PsbH, PsbI, PsbJ, PsbK, PsbL, PsbM, PsbT, PsbX, PsbY, PsbZ, Psb30/Ycf12, at least 3 peripheral proteins of the oxygen-evolving complex and a large number of cofactors. It forms dimeric complexes.

Its subcellular location is the plastid. It is found in the chloroplast thylakoid membrane. Its function is as follows. One of the components of the core complex of photosystem II (PSII). PSII is a light-driven water:plastoquinone oxidoreductase that uses light energy to abstract electrons from H(2)O, generating O(2) and a proton gradient subsequently used for ATP formation. It consists of a core antenna complex that captures photons, and an electron transfer chain that converts photonic excitation into a charge separation. The polypeptide is Photosystem II reaction center protein J (Welwitschia mirabilis (Tree tumbo)).